The primary structure comprises 1376 residues: Phospholipid-transporting ATPase DRS2 (1376 aa).

Gly residues predominate over residues 1–10 (MAGRPTGGPQ). Disordered stretches follow at residues 1–151 (MAGR…AAAR) and 180–217 (GYSEMDLPLTEPGGGGGGAGGGGHSRADSSGIDPPKRD). The Cytoplasmic segment spans residues 1 to 306 (MAGRPTGGPQ…QIPGLSPTNR (306 aa)). The segment covering 40–50 (DLMRTYTRDQE) has biased composition (basic and acidic residues). Over residues 85–96 (QSSSSNNNNNNN) the composition is skewed to low complexity. The span at 97–115 (VSAPYSRSGRQYSQTSDLG) shows a compositional bias: polar residues. The segment covering 191–203 (PGGGGGGAGGGGH) has biased composition (gly residues). A helical transmembrane segment spans residues 307-327 (FTTIIPLVAVLMVSAGKELVE). Residues 328–509 (DYRRKQADAA…KVEKKLNTLV (182 aa)) are Extracellular-facing. N-linked (GlcNAc...) asparagine glycans are attached at residues asparagine 339, asparagine 433, and asparagine 490. Residues 510–530 (LLLVGILMVLSIISTVGDLII) form a helical membrane-spanning segment. Over 531–559 (RRVEGDAISYLMLDQPDTAGKIAETFFKD) the chain is Cytoplasmic. Residues 560 to 580 (MVTYWVLFSSLVPISLFVTVE) form a helical membrane-spanning segment. Residues 581–1107 (MVKYWHGILI…VFSGAVIYES (527 aa)) lie on the Extracellular side of the membrane. Catalysis depends on aspartate 625, which acts as the 4-aspartylphosphate intermediate. 3 residues coordinate ATP: aspartate 625, lysine 626, and threonine 627. Aspartate 625 is a Mg(2+) binding site. Threonine 627 provides a ligand contact to Mg(2+). N-linked (GlcNAc...) asparagine glycosylation is present at asparagine 679. Residues glutamate 720 and phenylalanine 761 each contribute to the ATP site. Asparagine 762 is a glycosylation site (N-linked (GlcNAc...) asparagine). 10 residues coordinate ATP: serine 763, lysine 766, lysine 784, arginine 817, threonine 818, threonine 898, glycine 899, aspartate 900, arginine 991, and lysine 997. Residue aspartate 1018 participates in Mg(2+) binding. ATP is bound by residues asparagine 1021 and aspartate 1022. Position 1022 (aspartate 1022) interacts with Mg(2+). The N-linked (GlcNAc...) asparagine glycan is linked to asparagine 1083. A helical transmembrane segment spans residues 1108–1128 (WTLTFYNVFYTVLPPLALGIL). Over 1129–1165 (DQFISARLLDRYPQLYSMGQQNQFFRMKVFIEWLLNA) the chain is Cytoplasmic. Residues 1166-1186 (VYHSIILYVFGELIWHGDLIL) traverse the membrane as a helical segment. Topologically, residues 1187–1190 (ENGQ) are extracellular. Residues 1191-1211 (IAGHWMWGTALYAPVLLTVLG) form a helical membrane-spanning segment. Residue lysine 1212 coordinates a 1,2-diacyl-sn-glycero-3-phospho-(1D-myo-inositol 4-phosphate). Residues 1212–1224 (KAGLVTSNWTKYH) lie on the Cytoplasmic side of the membrane. Residues 1225 to 1245 (VIAIPGSMAIWWIFIAVYGTV) traverse the membrane as a helical segment. Over 1246 to 1257 (APMIPFSPEFHG) the chain is Extracellular. A helical membrane pass occupies residues 1258-1278 (IVPKLYSSPIFWLQSFALAIL). Over 1279–1376 (CLLRDFAWKY…TSSRPQGQGT (98 aa)) the chain is Cytoplasmic. A 1,2-diacyl-sn-glycero-3-phospho-(1D-myo-inositol 4-phosphate) contacts are provided by arginine 1282, tryptophan 1286, lysine 1287, tyrosine 1298, and histidine 1299.

This sequence belongs to the cation transport ATPase (P-type) (TC 3.A.3) family. Type IV subfamily. It depends on Mg(2+) as a cofactor.

The protein localises to the cell membrane. It localises to the golgi apparatus. Its subcellular location is the trans-Golgi network membrane. It catalyses the reaction ATP + H2O + phospholipidSide 1 = ADP + phosphate + phospholipidSide 2.. The enzyme catalyses a 1,2-diacyl-sn-glycero-3-phospho-L-serine(out) + ATP + H2O = a 1,2-diacyl-sn-glycero-3-phospho-L-serine(in) + ADP + phosphate + H(+). The catalysed reaction is a 1,2-diacyl-sn-glycero-3-phosphoethanolamine(out) + ATP + H2O = a 1,2-diacyl-sn-glycero-3-phosphoethanolamine(in) + ADP + phosphate + H(+). Catalytic component of a P4-ATPase flippase complex which catalyzes the hydrolysis of ATP coupled to the transport of phosphatidylserine and small amounts of ethanolamine from the lumen to the cytosolic leaflet of the trans-Golgi network and cell membrane and ensures the maintenance of asymmetric distribution of phospholipids. Required for efficient vesicle transport during toxin secretion. In Verticillium dahliae (strain VdLs.17 / ATCC MYA-4575 / FGSC 10137) (Verticillium wilt), this protein is Phospholipid-transporting ATPase DRS2 (DRS2).